Consider the following 959-residue polypeptide: Ataxin-2 homolog (959 aa).

In terms of domain architecture, Sm spans 13–92 (DVLSAINDMI…IVDFAYVTQE (80 aa)). 5 disordered regions span residues 203–378 (AREI…GSRV), 392–484 (TAPK…SVIT), 501–528 (PRVAPATPTATTPVQNEYHPQQQPHPAM), 697–831 (PPQG…QHIQ), and 867–959 (PMQQ…QSPP). The span at 226 to 235 (DLDKITRQED) shows a compositional bias: basic and acidic residues. Residues 246 to 260 (NNSFNQQQQQRRNPN) are compositionally biased toward low complexity. Over residues 270 to 281 (RRAEGLRGDRRN) the composition is skewed to basic and acidic residues. Positions 282-313 (SGSSSANNSRYGAPAAAQQNYSQNQQQQQGQK) are enriched in low complexity. Polar residues-rich tracts occupy residues 341–356 (RQQQKQMLDPRPNNNV) and 473–484 (VSVTSENDSVIT). Low complexity-rich tracts occupy residues 504–528 (APATPTATTPVQNEYHPQQQPHPAM), 697–707 (PPQGQQQQPRY), and 715–725 (QQQQQQPQQQQ). Composition is skewed to polar residues over residues 726–742 (FSGEQSRPQSHPNSQPT) and 756–765 (APQNGNMQAE). The segment covering 766 to 788 (SSSNASHSGSTSSQSGQRSGSPP) has biased composition (low complexity). The segment covering 789–798 (GAVPPPPPPQ) has biased composition (pro residues). Composition is skewed to low complexity over residues 822–831 (MMQQQQQHIQ), 867–876 (PMQQNQHPQQ), and 902–911 (QQQQQQQQQQ). The segment covering 912-922 (MHRQNSLPQQF) has biased composition (polar residues). Over residues 923-935 (QGNQGVNPSGQQS) the composition is skewed to low complexity. Positions 948 to 959 (TPRDQQHSQSPP) are enriched in polar residues.

The protein belongs to the ataxin-2 family. In terms of assembly, interacts (via C-terminus) with szy-20 (via C-terminus); the interaction is RNA independent. Interacts with pab-1. Interacts with gdi-1. Expressed in the central nervous system, dorsal and ventral nerve cord, intestinal lining and body-wall muscle. Expressed in the gonad.

It localises to the cytoplasm. The protein resides in the nucleus. Probable RNA-binding protein that negatively regulates the translation of targets. Functions with RNA-binding protein szy-20 to ensure embryonic cell division, and to this end, plays a role in the regulation of centrosome assembly, position and size, and in astral microtubule outgrowth and nucleation. Required for gonad development, germ cell proliferation and for the production of oocytes. Regulates whole body growth and fat accumulation in response to food availability, and this may be through the mTOR pathway, upstream of daf-15 and rheb-1. In Caenorhabditis elegans, this protein is Ataxin-2 homolog.